A 267-amino-acid polypeptide reads, in one-letter code: Diaminopimelate epimerase (267 aa).

Residues asparagine 15 and asparagine 66 each coordinate substrate. Catalysis depends on cysteine 75, which acts as the Proton donor. Substrate-binding positions include 76–77 (GN), asparagine 150, asparagine 183, and 201–202 (ER). Residue cysteine 210 is the Proton acceptor of the active site. 211-212 (GT) lines the substrate pocket.

This sequence belongs to the diaminopimelate epimerase family. In terms of assembly, homodimer.

The protein resides in the cytoplasm. It catalyses the reaction (2S,6S)-2,6-diaminopimelate = meso-2,6-diaminopimelate. Its pathway is amino-acid biosynthesis; L-lysine biosynthesis via DAP pathway; DL-2,6-diaminopimelate from LL-2,6-diaminopimelate: step 1/1. Functionally, catalyzes the stereoinversion of LL-2,6-diaminopimelate (L,L-DAP) to meso-diaminopimelate (meso-DAP), a precursor of L-lysine and an essential component of the bacterial peptidoglycan. This Bacteroides thetaiotaomicron (strain ATCC 29148 / DSM 2079 / JCM 5827 / CCUG 10774 / NCTC 10582 / VPI-5482 / E50) protein is Diaminopimelate epimerase.